Consider the following 208-residue polypeptide: Guanylate kinase (208 aa).

The 178-residue stretch at 4 to 181 folds into the Guanylate kinase-like domain; that stretch reads GLLIVISGPS…AVEKIQSIIS (178 aa). 11 to 18 lines the ATP pocket; it reads GPSGTGKG.

This sequence belongs to the guanylate kinase family.

The protein localises to the cytoplasm. It catalyses the reaction GMP + ATP = GDP + ADP. In terms of biological role, essential for recycling GMP and indirectly, cGMP. The protein is Guanylate kinase of Clostridium tetani (strain Massachusetts / E88).